Here is a 107-residue protein sequence, read N- to C-terminus: Cytochrome c2 (107 aa).

Cys-14, Cys-17, His-18, and Met-80 together coordinate heme c.

It belongs to the cytochrome c family. Binds 1 heme c group covalently per subunit.

Functionally, cytochrome c2 is found mainly in purple, non-sulfur, photosynthetic bacteria where it functions as the electron donor to the oxidized bacteriochlorophyll in the photophosphorylation pathway. However, it may also have a role in the respiratory chain and is found in some non-photosynthetic bacteria. This chain is Cytochrome c2, found in Rhodoblastus acidophilus (Rhodopseudomonas acidophila).